The following is a 549-amino-acid chain: Frizzled-7-A (549 aa).

Positions 1–22 are cleaved as a signal peptide; that stretch reads MSSTVSLLFCCLFLQLCPSAQQ. The Extracellular portion of the chain corresponds to 23-231; the sequence is YHGEKGISVP…EEEVRFARLW (209 aa). In terms of domain architecture, FZ spans 32 to 151; sequence PDHGFCQPIS…HGAGEICVGQ (120 aa). 5 disulfides stabilise this stretch: cysteine 37–cysteine 98, cysteine 45–cysteine 91, cysteine 82–cysteine 119, cysteine 108–cysteine 148, and cysteine 112–cysteine 136. Asparagine 51 carries an N-linked (GlcNAc...) asparagine glycan. A glycan (N-linked (GlcNAc...) asparagine) is linked at asparagine 152. The helical transmembrane segment at 232 to 252 threads the bilayer; that stretch reads VGIWAILCCISTLFTVLTYLV. At 253 to 263 the chain is on the cytoplasmic side; that stretch reads DMRRFSYPERP. Residues 264 to 284 form a helical membrane-spanning segment; the sequence is IIFLSGCYFMVAVAYTAGFLL. Over 285–311 the chain is Extracellular; sequence EERAVCVERFSEDSYRTVAQGTKKEGC. A helical membrane pass occupies residues 312 to 332; sequence TILFMILYFFGMASSIWWVIL. Topologically, residues 333–354 are cytoplasmic; sequence SLTWFLSAGMKWGHEAIEANSQ. Residues 355-375 form a helical membrane-spanning segment; sequence YFHLAAWAVPAVKTITILAMG. At 376–398 the chain is on the extracellular side; that stretch reads QVDGDVLSGVCYVGINSVDSLRG. A helical membrane pass occupies residues 399 to 419; it reads FVLAPLFVYLFIGTSFLLAGF. Residues 420-445 lie on the Cytoplasmic side of the membrane; sequence VSLFRIRTIMKHDGTKTEKLEKLMVR. Residues 446-466 form a helical membrane-spanning segment; that stretch reads IGVFSVMYTVPATIVLACYFY. Topologically, residues 467–503 are extracellular; it reads EQAFRDTWEKTWLVQTCKGYAVPCPNYNFAPMSPDFT. A helical transmembrane segment spans residues 504–524; that stretch reads VFMIKYLMTMIVGITSSFWIW. Topologically, residues 525–549 are cytoplasmic; that stretch reads SGKTLQSWRRFYHRLSNGSKGETAV. Residues 527 to 532 carry the Lys-Thr-X-X-X-Trp motif, mediates interaction with the PDZ domain of Dvl family members motif; that stretch reads KTLQSW. Positions 547–549 match the PDZ-binding motif; the sequence is TAV.

The protein belongs to the G-protein coupled receptor Fz/Smo family. In terms of assembly, interacts with wnt11 and sdc4. The extracellular domain interacts with the extracellular domain of pcdh8/papc. As to expression, expressed in the animal region of cleavage stage embryos. During gastrulation, broadly expressed on the dorsal side of the embryo in deep mesodermal cells surrounding the blastopore lip and in presumptive anterior neuroectoderm. During neurulation, becomes progressively more restricted to the dorsal epidermis, neural plate, and neural tube. Expressed in the cranial neural crest of neurulae and tailbud embryos as well as the pronephros of tailbud embryos. Localized to the brain of neurulae, tailbud embryos and tadpoles. In tadpoles, strongly expressed in the eye and developing heart.

The protein resides in the cell membrane. Its subcellular location is the endosome membrane. Functionally, receptor for Wnt proteins. Acts in both canonical and non-canonical Wnt pathways. Although different papers report differing Wnt preferences, wnt5a, wnt8b and wnt11 have been proposed as synergists. In the canonical Wnt pathway, acts via beta-catenin to promote the expression of the dorsal genes siamois, twin and nodal3 and to establish the dorsal axis of the embryo and induce dorsal mesoderm formation. In a non-canonical Wnt/planar cell polarity (PCP) pathway, acts with sdc4 and dvl2/dsh to regulate convergent extension cell movements during gastrulation. Triggers phosphorylation of dvl2/dsh and its translocation to the plasma membrane. In a third branch of Wnt signaling, acts in a non-canonical pathway via trimeric G proteins, and independently of dvl2/dsh, to recruit protein kinase C (PKC) to the membrane and thus activate PKC. PKC signaling controls cell sorting and tissue separation during gastrulation. This Xenopus laevis (African clawed frog) protein is Frizzled-7-A (fzd7-a).